Consider the following 380-residue polypeptide: Cytochrome b (380 aa).

The next 4 membrane-spanning stretches (helical) occupy residues 34–54 (FGSLLGICLTTQILTGLLLAM), 78–99 (WLIRNMHANGASLLFICIYLHI), 114–134 (WNTGVILLLTLMATAFVGYVL), and 179–199 (FFALHFLLPFMITGLTLIHLT). Heme b is bound by residues His84 and His98. 2 residues coordinate heme b: His183 and His197. His202 lines the a ubiquinone pocket. Helical transmembrane passes span 227-247 (TKDILGFTLMLLPLTTLALFS), 289-309 (LGGVLALAASVLVLFLSPLLH), 321-341 (LSQLLFWTLVANLLILTWIGS), and 348-368 (FIIIGQLASTTYFIILLILFP).

It belongs to the cytochrome b family. The cytochrome bc1 complex contains 11 subunits: 3 respiratory subunits (MT-CYB, CYC1 and UQCRFS1), 2 core proteins (UQCRC1 and UQCRC2) and 6 low-molecular weight proteins (UQCRH/QCR6, UQCRB/QCR7, UQCRQ/QCR8, UQCR10/QCR9, UQCR11/QCR10 and a cleavage product of UQCRFS1). This cytochrome bc1 complex then forms a dimer. Heme b is required as a cofactor.

It localises to the mitochondrion inner membrane. Functionally, component of the ubiquinol-cytochrome c reductase complex (complex III or cytochrome b-c1 complex) that is part of the mitochondrial respiratory chain. The b-c1 complex mediates electron transfer from ubiquinol to cytochrome c. Contributes to the generation of a proton gradient across the mitochondrial membrane that is then used for ATP synthesis. The polypeptide is Cytochrome b (MT-CYB) (Pygoscelis antarcticus (Chinstrap penguin)).